Consider the following 345-residue polypeptide: Pyruvate dehydrogenase E1 component subunit alpha (345 aa).

Heterodimer of an alpha and a beta chain. Thiamine diphosphate is required as a cofactor.

The enzyme catalyses N(6)-[(R)-lipoyl]-L-lysyl-[protein] + pyruvate + H(+) = N(6)-[(R)-S(8)-acetyldihydrolipoyl]-L-lysyl-[protein] + CO2. Functionally, the pyruvate dehydrogenase complex catalyzes the overall conversion of pyruvate to acetyl-CoA and CO(2). It contains multiple copies of three enzymatic components: pyruvate dehydrogenase (E1), dihydrolipoamide acetyltransferase (E2) and lipoamide dehydrogenase (E3). The polypeptide is Pyruvate dehydrogenase E1 component subunit alpha (pdhA) (Acholeplasma laidlawii).